Consider the following 122-residue polypeptide: Large ribosomal subunit protein uL14 (122 aa).

The protein belongs to the universal ribosomal protein uL14 family. Part of the 50S ribosomal subunit. Forms a cluster with proteins L3 and L19. In the 70S ribosome, L14 and L19 interact and together make contacts with the 16S rRNA in bridges B5 and B8.

Binds to 23S rRNA. Forms part of two intersubunit bridges in the 70S ribosome. The sequence is that of Large ribosomal subunit protein uL14 from Streptococcus pneumoniae (strain JJA).